We begin with the raw amino-acid sequence, 512 residues long: 3-ketoacyl-CoA synthase 9 (512 aa).

The next 2 helical transmembrane spans lie at 44-64 (LITHLFKLCLVPLMAVLVTEI) and 83-103 (LVAFIFLSALAIFGSTVYIMS). Positions 100–389 (YIMSRPRSVY…FFMTLVTKKL (290 aa)) constitute an FAE domain. Active-site residues include Cys-244, His-323, His-407, His-411, His-440, and Asn-444.

This sequence belongs to the thiolase-like superfamily. Chalcone/stilbene synthases family. As to expression, expressed in seedlings, stems, leaves, flowers and siliques. Expressed in roots, leaves, and stems, including epidermis, silique walls, sepals, the upper portion of the styles, and seed coats, but not in developing embryos.

Its subcellular location is the endoplasmic reticulum membrane. It catalyses the reaction a very-long-chain acyl-CoA + malonyl-CoA + H(+) = a very-long-chain 3-oxoacyl-CoA + CO2 + CoA. Its pathway is lipid metabolism; fatty acid biosynthesis. Functionally, involved in the elongation of C22 to C24 fatty acids, which are precursors for the biosynthesis of cuticular waxes, aliphatic suberins, and membrane lipids, including sphingolipids and phospholipids. The sequence is that of 3-ketoacyl-CoA synthase 9 from Arabidopsis thaliana (Mouse-ear cress).